The following is a 502-amino-acid chain: Neuronal acetylcholine receptor subunit alpha-7 (502 aa).

Positions 1 to 22 (MRCSPGGVWLALAASLLHVSLQ) are cleaved as a signal peptide. The Extracellular segment spans residues 23 to 233 (GEFQRKLYKE…VTMRRRTLYY (211 aa)). Residues R42 and V44 each coordinate Ca(2+). N46, N90, and N133 each carry an N-linked (GlcNAc...) asparagine glycan. Cysteines 150 and 164 form a disulfide. Positions 172 and 210 each coordinate Ca(2+). The cysteines at positions 212 and 213 are disulfide-linked. 3 helical membrane passes run 234–254 (GLNL…VFLL), 259–279 (GEKI…MLLV), and 292–315 (LIAQ…VIVL). The segment at 260 to 267 (EKISLGIT) is essential for TMEM35A/NACHO-mediated proper subunit assembly and trafficking to cell membrane. Topologically, residues 316–466 (QYHHHDPDGG…CSEWKFAACV (151 aa)) are cytoplasmic. Residues 467–489 (VDRLCLMAFSVFTIICTIGILMS) form a helical membrane-spanning segment.

This sequence belongs to the ligand-gated ion channel (TC 1.A.9) family. Acetylcholine receptor (TC 1.A.9.1) subfamily. Alpha-7/CHRNA7 sub-subfamily. In terms of assembly, homopentamer. Can also form heteropentamers with CHRNB2, mainly found in basal forebrain cholinergic neurons. Interacts with RIC3; which is required for proper folding and assembly. Interacts with LYPD6. Interacts with CANX. In terms of processing, glycosylations at Asn-46, Asn-90 and Asn-133 are essential for TMEM35A/NACHO-mediated proper subunit assembly and trafficking to the cell membrane. As to expression, expressed in neuronal cells. Expressed in macrophages (at protein level).

Its subcellular location is the postsynaptic cell membrane. The protein localises to the cell membrane. The catalysed reaction is Ca(2+)(in) = Ca(2+)(out). The enzyme catalyses K(+)(in) = K(+)(out). It catalyses the reaction Na(+)(in) = Na(+)(out). It carries out the reaction choline(out) = choline(in). The catalysed reaction is NH4(+)(in) = NH4(+)(out). The enzyme catalyses L-arginine(in) = L-arginine(out). It catalyses the reaction guanidine(out) = guanidine(in). Activated by a myriad of ligands such as acetylcholine, cytisine, nicotine, choline and epibatidine. Oligomeric amyloid-beta protein 42 activates specifially CHRNA7:CHRNB2 nAchRs. Activity is modulated by positive allosteric modulators (PAMs), such as flavonoids, with a wide range of chemical diversity, pharmacological sensitivity and efficacy. AChR activity is inhibited by the antagonists alpha-conotoxons RgIA, ImI and ImII, small disulfide-constrained peptides from cone snails. Alpha-conotoxin PnIC selectively inhibits CHRNA7:CHRNB2 over CHRNA7 homopentamer. Functionally, component of neuronal acetylcholine receptors (nAChRs) that function as pentameric, ligand-gated cation channels with high calcium permeability among other activities. nAChRs are excitatory neurotrasnmitter receptors formed by a collection of nAChR subunits known to mediate synaptic transmission in the nervous system and the neuromuscular junction. Each nAchR subunit confers differential attributes to channel properties, including activation, deactivation and desensitization kinetics, pH sensitivity, cation permeability, and binding to allosteric modulators. CHRNA7 forms homopentameric neuronal acetylcholine receptors abundantly expressed in the central nervous system, characterized by fast desensitization and high calcium permeability. Also forms heteropentamers with CHRNB2, mainly expressed in basal forebrain cholinergic neurons. Involved in the modulation of calcium-dependent signaling pathways and influences the release of neurotransmitters, including dopamine, glutamate and GABA. Also expressed in non-neuronal cells such as immune cells like lymphocytes, monocytes and macrophages. In T cells, activation induces metabotropic signaling that results in an increase of intracellular Ca2+ concentrations, independent of ionotropic receptor functions. In macrophages, required for acetylcholine-mediated inhibition of TNF and other inflammatory cytokine release. Once activated by acetylcholine, nicotine or other agonists, selectively inhibits production of pro-inflammatory cytokines while leaving anti-inflammatory cytokines undisturbed. Stimulates the cholinergic anti-inflammatory pathway, controlling inflammation by inhibiting NFKB nuclear translocation and activating the JAK2-STAT3 pathway, independently of ion channel activity. Also expressed in the urothelium where it modulates reflex bladder activity by increasing intracellular calcium through internal stores and decreasing basal ATP release. This Homo sapiens (Human) protein is Neuronal acetylcholine receptor subunit alpha-7.